A 212-amino-acid chain; its full sequence is MNSKFIVIEGLEGAGKTTTRDTVVAVLRAQGINDIVFTREPGGTPLAEKLRDLIKQGIDGEVLTDKAEVLMLYAARVQLVENVIKPALARGSWVVGDRHDLSSQAYQGGGRGIDSQLMASLRDTVLGEFRPDLTLYLDLPPAVGLARARARGELDRIEQESLAFFERTRARYLELAASDASIKTIDASQPIEQVSASISQALAQWLTNQEPV.

An ATP-binding site is contributed by 10–17; that stretch reads GLEGAGKT.

It belongs to the thymidylate kinase family.

The enzyme catalyses dTMP + ATP = dTDP + ADP. In terms of biological role, phosphorylation of dTMP to form dTDP in both de novo and salvage pathways of dTTP synthesis. The sequence is that of Thymidylate kinase from Yersinia pestis bv. Antiqua (strain Antiqua).